Reading from the N-terminus, the 430-residue chain is Forkhead box protein N2 (430 aa).

A disordered region spans residues 1-47; that stretch reads MGPATGMTPDKNIESPTAEKVPGLSQTENMGSLPEEVGAARPKASMV. Positions 108–204 form a DNA-binding region, fork-head; sequence KPPYSFSLLI…QALKKQPFSS (97 aa). 2 disordered regions span residues 299-326 and 338-391; these read NIDP…SVSS and PKNS…EASQ. Positions 355 to 366 are enriched in acidic residues; it reads DDTDIDYEEDTL. Basic and acidic residues predominate over residues 381 to 390; sequence HGSKLRKEAS.

In terms of tissue distribution, expressed in the developing eye from stage 23. Localized to the prospective retinal layer and a layer of cells lateral to the ventricular zone. At stage 29, expression extends to the branchial arches and the brain. At stage 33/34, expressed in the vagal ganglion. At stage 36, expression in the retina decreases. Not expressed in the eye lens.

The protein localises to the nucleus. The chain is Forkhead box protein N2 from Xenopus laevis (African clawed frog).